Consider the following 684-residue polypeptide: Galactocerebrosidase (684 aa).

A signal peptide spans 1-42; that stretch reads MANSQPKASQQRQAKVMTAAAGSASRVAVPLLLCALLVPGGA. Positions 109, 151, and 197 each coordinate substrate. Glu198 serves as the catalytic Proton donor/acceptor. Glu274 (nucleophile) is an active-site residue. Cys287 and Cys394 are joined by a disulfide. 2 N-linked (GlcNAc...) asparagine glycosylation sites follow: Asn300 and Asn379. Arg396 serves as a coordination point for substrate. N-linked (GlcNAc...) asparagine glycosylation is found at Asn403, Asn558, Asn601, and Asn645.

It belongs to the glycosyl hydrolase 59 family. Detected in brain and kidney.

The protein resides in the lysosome. It carries out the reaction a beta-D-galactosyl-(1&lt;-&gt;1')-N-acylsphing-4-enine + H2O = an N-acylsphing-4-enine + D-galactose. The catalysed reaction is a D-galactosylceramide + H2O = an N-acyl-sphingoid base + D-galactose. It catalyses the reaction beta-D-galactosyl-(1&lt;-&gt;1)-sphing-4-enine + H2O = sphing-4-enine + D-galactose. Hydrolyzes the galactose ester bonds of glycolipids such as galactosylceramide and galactosylsphingosine. Enzyme with very low activity responsible for the lysosomal catabolism of galactosylceramide, a major lipid in myelin, kidney and epithelial cells of small intestine and colon. The chain is Galactocerebrosidase from Mus musculus (Mouse).